The chain runs to 44 residues: Thymosin beta-4 (44 aa).

Over residues 1–25 the composition is skewed to basic and acidic residues; the sequence is MADKPDMAEIEKFDKSKLKKTETQE. A disordered region spans residues 1 to 44; sequence MADKPDMAEIEKFDKSKLKKTETQEKNPLPSKETIEQEKQAGES. The residue at position 2 (A2) is an N-acetylalanine. K4 is modified (N6-acetyllysine). Position 12 is an N6-acetyllysine; alternate (K12). K12 is covalently cross-linked (Glycyl lysine isopeptide (Lys-Gly) (interchain with G-Cter in SUMO2); alternate). At T23 the chain carries Phosphothreonine. The residue at position 26 (K26) is an N6-acetyllysine. Position 31 is a phosphoserine (S31). K32 carries the post-translational modification N6-acetyllysine. Positions 33–44 are enriched in basic and acidic residues; that stretch reads ETIEQEKQAGES. T34 is subject to Phosphothreonine. Residue K39 is modified to N6-acetyllysine.

The protein belongs to the thymosin beta family. In terms of tissue distribution, originally found in thymus but it is widely distributed in many tissues.

It is found in the cytoplasm. The protein resides in the cytoskeleton. In terms of biological role, plays an important role in the organization of the cytoskeleton. Binds to and sequesters actin monomers (G actin) and therefore inhibits actin polymerization. Functionally, seraspenide inhibits the entry of hematopoietic pluripotent stem cells into the S-phase. The chain is Thymosin beta-4 (TMSB4) from Oryctolagus cuniculus (Rabbit).